A 211-amino-acid polypeptide reads, in one-letter code: Protein-L-isoaspartate O-methyltransferase (211 aa).

S62 is a catalytic residue.

It belongs to the methyltransferase superfamily. L-isoaspartyl/D-aspartyl protein methyltransferase family.

The protein resides in the cytoplasm. It catalyses the reaction [protein]-L-isoaspartate + S-adenosyl-L-methionine = [protein]-L-isoaspartate alpha-methyl ester + S-adenosyl-L-homocysteine. Functionally, catalyzes the methyl esterification of L-isoaspartyl residues in peptides and proteins that result from spontaneous decomposition of normal L-aspartyl and L-asparaginyl residues. It plays a role in the repair and/or degradation of damaged proteins. This Shewanella sp. (strain MR-4) protein is Protein-L-isoaspartate O-methyltransferase.